A 699-amino-acid chain; its full sequence is SPS-sensor serine protease component SSY5 (699 aa).

Disordered regions lie at residues 1–113 (MVRF…LQGF) and 129–158 (VKEE…GNAR). Positions 1–381 (MVRFFGLNKK…YCVKDYIKKA (381 aa)) are excised as a propeptide. A compositionally biased stretch (polar residues) spans 24 to 38 (NEQNAAETSSSNVSG). Basic and acidic residues predominate over residues 39–51 (NEERIDPNSHDAN). A compositionally biased stretch (low complexity) spans 52-78 (PENANNDDASTTFGSSIQSSSIFSRGR). A compositionally biased stretch (polar residues) spans 83-93 (TGASSSMATSE). Low complexity-rich tracts occupy residues 97–109 (HSSG…NSKN) and 144–154 (SSSTSSTLATS). The tract at residues 459–699 (FAITCAHVVL…QWDIDPQLDG (241 aa)) is serine protease. Active-site charge relay system residues include His465, Asp545, and Ser640.

Belongs to the peptidase S64 family. In terms of assembly, component of the plasma membrane SPS (SSY1-PTR3-SSY5) amino acid sensor complex. In terms of processing, the propeptide is autoproteolytically cleaved from the catalytic domain but remains associated, forming an inactive protease complex. This processing occurs even in the absence of signaling.

It localises to the cell membrane. Functionally, protease component of the SPS-sensor system, which regulates the expression of several amino acid-metabolizing enzymes and amino acid- and peptide-permeases in response to extracellular amino acid levels by controlling the activity of two transcription factors, STP1 and STP2. Catalyzes the activation of these transcription factors, which are synthesized as latent cytoplasmic precursors, by proteolytic removal of an N-terminal inhibitory domain containing cytoplasmic retention motifs. SSY5 binds as an inactive protease complex to STP1. In response to extracellular amino acids and dependent on the other SPS-sensor components, the inhibitory propeptide is induced to dissociate, and thereby enables the catalytic domain to process STP1. The protein is SPS-sensor serine protease component SSY5 (SSY5) of Saccharomyces cerevisiae (strain YJM789) (Baker's yeast).